Reading from the N-terminus, the 82-residue chain is uncharacterized protein (82 aa).

The interval 1–20 is disordered; it reads MMNLSPPFKSPSGSSRAGRR.

This is an uncharacterized protein from Archaeoglobus fulgidus (strain ATCC 49558 / DSM 4304 / JCM 9628 / NBRC 100126 / VC-16).